The following is a 250-amino-acid chain: NH(3)-dependent NAD(+) synthetase (250 aa).

30–37 serves as a coordination point for ATP; sequence GVSGGIDS. Residue Asp-36 coordinates Mg(2+). Arg-117 serves as a coordination point for deamido-NAD(+). Position 137 (Thr-137) interacts with ATP. Position 142 (Glu-142) interacts with Mg(2+). 2 residues coordinate deamido-NAD(+): Lys-150 and Asp-157. Residues Lys-166 and Ser-188 each contribute to the ATP site. Position 234–235 (234–235) interacts with deamido-NAD(+); the sequence is HK.

It belongs to the NAD synthetase family. Homodimer.

The enzyme catalyses deamido-NAD(+) + NH4(+) + ATP = AMP + diphosphate + NAD(+) + H(+). It participates in cofactor biosynthesis; NAD(+) biosynthesis; NAD(+) from deamido-NAD(+) (ammonia route): step 1/1. Functionally, catalyzes the ATP-dependent amidation of deamido-NAD to form NAD. Uses ammonia as a nitrogen source. The sequence is that of NH(3)-dependent NAD(+) synthetase from Mannheimia succiniciproducens (strain KCTC 0769BP / MBEL55E).